We begin with the raw amino-acid sequence, 273 residues long: Formamidopyrimidine-DNA glycosylase (273 aa).

P2 functions as the Schiff-base intermediate with DNA in the catalytic mechanism. Catalysis depends on E3, which acts as the Proton donor. K59 (proton donor; for beta-elimination activity) is an active-site residue. 2 residues coordinate DNA: H92 and R111. The segment at 239-273 (KVYGKTDEPCVVCGKPIEKIKLNGRGTHFCPNCQK) adopts an FPG-type zinc-finger fold. R263 functions as the Proton donor; for delta-elimination activity in the catalytic mechanism.

Belongs to the FPG family. As to quaternary structure, monomer. Zn(2+) is required as a cofactor.

The enzyme catalyses Hydrolysis of DNA containing ring-opened 7-methylguanine residues, releasing 2,6-diamino-4-hydroxy-5-(N-methyl)formamidopyrimidine.. The catalysed reaction is 2'-deoxyribonucleotide-(2'-deoxyribose 5'-phosphate)-2'-deoxyribonucleotide-DNA = a 3'-end 2'-deoxyribonucleotide-(2,3-dehydro-2,3-deoxyribose 5'-phosphate)-DNA + a 5'-end 5'-phospho-2'-deoxyribonucleoside-DNA + H(+). Its function is as follows. Involved in base excision repair of DNA damaged by oxidation or by mutagenic agents. Acts as a DNA glycosylase that recognizes and removes damaged bases. Has a preference for oxidized purines, such as 7,8-dihydro-8-oxoguanine (8-oxoG). Has AP (apurinic/apyrimidinic) lyase activity and introduces nicks in the DNA strand. Cleaves the DNA backbone by beta-delta elimination to generate a single-strand break at the site of the removed base with both 3'- and 5'-phosphates. The polypeptide is Formamidopyrimidine-DNA glycosylase (Listeria monocytogenes serotype 4b (strain F2365)).